The sequence spans 1003 residues: Phosphatidylinositol 4,5-bisphosphate 5-phosphatase A (1003 aa).

Disordered stretches follow at residues 1-110 (MEGQ…AAKS) and 147-414 (AMPR…QPTC). An RSXSXX motif 1 motif is present at residues 6–11 (RSGSAR). Residues 11–24 (RPGTRTGLGPLPGT) are compositionally biased toward low complexity. R56 carries the asymmetric dimethylarginine; alternate modification. Residue R56 is modified to Omega-N-methylarginine; alternate. Omega-N-methylarginine is present on R65. The residue at position 76 (R76) is an Asymmetric dimethylarginine. At R83 the chain carries Asymmetric dimethylarginine; alternate. R83 carries the omega-N-methylarginine; alternate modification. The span at 160 to 174 (LTPTSRDQKQLSPTS) shows a compositional bias: polar residues. S171 carries the phosphoserine modification. The span at 180-196 (ALATSGLSLALASQEQP) shows a compositional bias: low complexity. Positions 197 to 210 (PQSPSSPSPVPSPV) are enriched in pro residues. The segment covering 284 to 294 (ARPEAPRHSPE) has biased composition (basic and acidic residues). Phosphoserine is present on residues S292 and S325. Residues 338-348 (VPPPLPKPPRS) are compositionally biased toward pro residues. Positions 346 to 351 (PRSPSR) match the SH3-binding motif. Composition is skewed to low complexity over residues 349 to 361 (PSRS…NRSP) and 390 to 413 (QAQE…AQPT). Positions 351 to 356 (RSPSRS) match the RSXSXX motif 2 motif. The catalytic stretch occupies residues 422–725 (ITVVTWNVGT…SDHKPVAAQF (304 aa)). The interval 726–837 (ILQFAFRDDV…IGVTEPFQIS (112 aa)) is required for ruffle localization. Residues 839-1003 (PTSESASSST…LGLEEGGLGP (165 aa)) form a disordered region. The span at 840 to 855 (TSESASSSTDSSGTSS) shows a compositional bias: low complexity. 2 short sequence motifs (RSXSXX motif) span residues 871 to 876 (RSPSPG) and 882 to 887 (RSRSPG). S900 carries the post-translational modification Phosphoserine. 2 stretches are compositionally biased toward low complexity: residues 907–919 (SRSP…QLPR) and 927–943 (SSSS…GLPG). The RSXSXX motif 5 motif lies at 908-913 (RSPSPQ). S987 bears the Phosphoserine mark.

Belongs to the inositol 1,4,5-trisphosphate 5-phosphatase type II family.

It localises to the cytoplasm. The catalysed reaction is 1D-myo-inositol 1,4,5-trisphosphate + H2O = 1D-myo-inositol 1,4-bisphosphate + phosphate. It catalyses the reaction 1D-myo-inositol 1,3,4,5-tetrakisphosphate + H2O = 1D-myo-inositol 1,3,4-trisphosphate + phosphate. The enzyme catalyses a 1,2-diacyl-sn-glycero-3-phospho-(1D-myo-inositol-4,5-bisphosphate) + H2O = a 1,2-diacyl-sn-glycero-3-phospho-(1D-myo-inositol 4-phosphate) + phosphate. In terms of biological role, inositol 5-phosphatase, which converts inositol 1,4,5-trisphosphate to inositol 1,4-bisphosphate. Also converts phosphatidylinositol 4,5-bisphosphate to phosphatidylinositol 4-phosphate and inositol 1,3,4,5-tetrakisphosphate to inositol 1,3,4-trisphosphate in vitro. May be involved in modulation of the function of inositol and phosphatidylinositol polyphosphate-binding proteins that are present at membranes ruffles. This chain is Phosphatidylinositol 4,5-bisphosphate 5-phosphatase A (Inpp5j), found in Mus musculus (Mouse).